The sequence spans 246 residues: Large ribosomal subunit protein uL2 (246 aa).

The interval 197-227 (SPYAHPHGGGSHQKGGTPVPKTAPPGQKVGF) is disordered.

Belongs to the universal ribosomal protein uL2 family. As to quaternary structure, part of the 50S ribosomal subunit. Forms a bridge to the 30S subunit in the 70S ribosome.

Its function is as follows. One of the primary rRNA binding proteins. Required for association of the 30S and 50S subunits to form the 70S ribosome, for tRNA binding and peptide bond formation. It has been suggested to have peptidyltransferase activity; this is somewhat controversial. Makes several contacts with the 16S rRNA in the 70S ribosome. The polypeptide is Large ribosomal subunit protein uL2 (Pyrobaculum aerophilum (strain ATCC 51768 / DSM 7523 / JCM 9630 / CIP 104966 / NBRC 100827 / IM2)).